The sequence spans 246 residues: Aquaporin SIP1-1 (246 aa).

2 helical membrane passes run 13–33 and 45–65; these read AAVT…TAAV and YALL…NLLC. The NPA 1 signature appears at 74 to 76; the sequence is NPT. The next 3 membrane-spanning stretches (helical) occupy residues 95 to 115, 139 to 159, and 166 to 186; these read FPLA…AMAI, GAAA…WIIV, and IVKT…GAAY. An NPA 2 motif is present at residues 192-194; the sequence is NPA. The chain crosses the membrane as a helical span at residues 214 to 234; that stretch reads VYWICPFVGAVLAAWVFRAVF.

It belongs to the MIP/aquaporin (TC 1.A.8) family. SIP (TC 1.A.8.10) subfamily. In terms of tissue distribution, expressed in roots, leaves and anthers.

It is found in the membrane. In terms of biological role, aquaporins facilitate the transport of water and small neutral solutes across cell membranes. This chain is Aquaporin SIP1-1 (SIP1-1), found in Oryza sativa subsp. japonica (Rice).